We begin with the raw amino-acid sequence, 155 residues long: MSFVIWITGPSGAGKTTLANALYKKLESMGYRVELLDGDGVRRKLYPNLGFSEEERWMHNRVVVEMARRLSRNGIITIVSVVSPYRAWREYARKEIEKFVEVYPRCPLEVRMKRDPKGLYSKALRGEIKGLTGLDGEYEEPENPEVVVDTDKNDR.

9 to 16 (GPSGAGKT) is a binding site for ATP. The Phosphoserine intermediate role is filled by S83. The tract at residues 134–155 (LDGEYEEPENPEVVVDTDKNDR) is disordered.

This sequence belongs to the APS kinase family.

The catalysed reaction is adenosine 5'-phosphosulfate + ATP = 3'-phosphoadenylyl sulfate + ADP + H(+). It participates in sulfur metabolism; hydrogen sulfide biosynthesis; sulfite from sulfate: step 2/3. Catalyzes the synthesis of activated sulfate. This Archaeoglobus fulgidus (strain ATCC 49558 / DSM 4304 / JCM 9628 / NBRC 100126 / VC-16) protein is Probable adenylyl-sulfate kinase (cysC).